The following is a 349-amino-acid chain: MDDRILTSVNLEEDSAEYNLRPQKLNEYIGQSKVKEKMDIFIRAAKKRGEALDHVLFYGPPGLGKTTLANIIAKEMGGNLKVTSGPAIERAGDLAAILTGLSEYDVLFIDEIHRLNRSVEEILYPAMEDYALDIIIGKGAAAKSIRLDLPKFTLIGATTRVGLLTAPLRDRFGVLCPMEFYNDEELKEIIVRSSSILDIDIDEDAALEIAMRSRGTPRIANRLLKRVRDYADVKGRGIVNLDSAKKALNLLEVDDEGFDSIDNKIIQAIVNNFAGGPVGIETLSYFVGEEIDTIEDVYEPYLLQKGFIMRTPRGRMATKKAYEHLKVPFNMKKNGTVNNDQCSFFKKEK.

The tract at residues 1–181 (MDDRILTSVN…FGVLCPMEFY (181 aa)) is large ATPase domain (RuvB-L). Residues Leu20, Arg21, Gly62, Lys65, Thr66, Thr67, 128-130 (EDY), Arg171, Tyr181, and Arg218 contribute to the ATP site. Residue Thr66 participates in Mg(2+) binding. The interval 182 to 252 (NDEELKEIIV…SAKKALNLLE (71 aa)) is small ATPAse domain (RuvB-S). A head domain (RuvB-H) region spans residues 255–349 (DEGFDSIDNK…DQCSFFKKEK (95 aa)). DNA contacts are provided by Arg310 and Arg315.

This sequence belongs to the RuvB family. In terms of assembly, homohexamer. Forms an RuvA(8)-RuvB(12)-Holliday junction (HJ) complex. HJ DNA is sandwiched between 2 RuvA tetramers; dsDNA enters through RuvA and exits via RuvB. An RuvB hexamer assembles on each DNA strand where it exits the tetramer. Each RuvB hexamer is contacted by two RuvA subunits (via domain III) on 2 adjacent RuvB subunits; this complex drives branch migration. In the full resolvosome a probable DNA-RuvA(4)-RuvB(12)-RuvC(2) complex forms which resolves the HJ.

The protein localises to the cytoplasm. It carries out the reaction ATP + H2O = ADP + phosphate + H(+). Functionally, the RuvA-RuvB-RuvC complex processes Holliday junction (HJ) DNA during genetic recombination and DNA repair, while the RuvA-RuvB complex plays an important role in the rescue of blocked DNA replication forks via replication fork reversal (RFR). RuvA specifically binds to HJ cruciform DNA, conferring on it an open structure. The RuvB hexamer acts as an ATP-dependent pump, pulling dsDNA into and through the RuvAB complex. RuvB forms 2 homohexamers on either side of HJ DNA bound by 1 or 2 RuvA tetramers; 4 subunits per hexamer contact DNA at a time. Coordinated motions by a converter formed by DNA-disengaged RuvB subunits stimulates ATP hydrolysis and nucleotide exchange. Immobilization of the converter enables RuvB to convert the ATP-contained energy into a lever motion, pulling 2 nucleotides of DNA out of the RuvA tetramer per ATP hydrolyzed, thus driving DNA branch migration. The RuvB motors rotate together with the DNA substrate, which together with the progressing nucleotide cycle form the mechanistic basis for DNA recombination by continuous HJ branch migration. Branch migration allows RuvC to scan DNA until it finds its consensus sequence, where it cleaves and resolves cruciform DNA. This chain is Holliday junction branch migration complex subunit RuvB, found in Clostridium acetobutylicum (strain ATCC 824 / DSM 792 / JCM 1419 / IAM 19013 / LMG 5710 / NBRC 13948 / NRRL B-527 / VKM B-1787 / 2291 / W).